The chain runs to 648 residues: Copper methylamine oxidase (648 aa).

Positions 1-9 (MTLNAESEA) are excised as a propeptide. Position 299-310 (299-310 (AFDSGEYNIGNM)) interacts with substrate. D301 acts as the Proton acceptor in catalysis. Residues C320 and C346 are joined by a disulfide bond. 382-387 (VANYEY) is a binding site for substrate. The active-site Schiff-base intermediate with substrate; via topaquinone is Y385. 2',4',5'-topaquinone is present on Y385. Residues H436 and H438 each contribute to the Cu cation site. Mn(2+)-binding residues include D445, F446, and D584. H595 serves as a coordination point for Cu cation. Positions 629–648 (PTSTSTTQTGEADTCCHTDK) are disordered.

The protein belongs to the copper/topaquinone oxidase family. In terms of assembly, homodimer. The cofactor is Cu cation. It depends on Zn(2+) as a cofactor. Requires L-topaquinone as cofactor. Mn(2+) is required as a cofactor. Post-translationally, topaquinone (TPQ) is generated by copper-dependent autoxidation of a specific tyrosyl residue.

The enzyme catalyses a primary methyl amine + O2 + H2O = an aldehyde + H2O2 + NH4(+). This Arthrobacter sp. (strain P1) protein is Copper methylamine oxidase (maoII).